The chain runs to 305 residues: Large ribosomal subunit protein uL10 (305 aa).

It belongs to the universal ribosomal protein uL10 family. In terms of assembly, P0 forms a pentameric complex by interaction with dimers of P1 and P2. Phosphorylated.

Functionally, ribosomal protein P0 is the functional equivalent of E.coli protein L10. The chain is Large ribosomal subunit protein uL10 (rplp0) from Dictyostelium discoideum (Social amoeba).